The following is a 365-amino-acid chain: tRNA-specific 2-thiouridylase MnmA (365 aa).

ATP is bound by residues 12-19 (AMSGGVDS) and Met38. Cys108 acts as the Nucleophile in catalysis. A disulfide bridge links Cys108 with Cys206. ATP is bound at residue Gly132. Residues 156–158 (KDQ) are interaction with tRNA. The active-site Cysteine persulfide intermediate is the Cys206. Positions 312-313 (RY) are interaction with tRNA.

The protein belongs to the MnmA/TRMU family.

It localises to the cytoplasm. It carries out the reaction S-sulfanyl-L-cysteinyl-[protein] + uridine(34) in tRNA + AH2 + ATP = 2-thiouridine(34) in tRNA + L-cysteinyl-[protein] + A + AMP + diphosphate + H(+). Catalyzes the 2-thiolation of uridine at the wobble position (U34) of tRNA, leading to the formation of s(2)U34. This chain is tRNA-specific 2-thiouridylase MnmA, found in Carboxydothermus hydrogenoformans (strain ATCC BAA-161 / DSM 6008 / Z-2901).